A 417-amino-acid chain; its full sequence is NADH-quinone oxidoreductase subunit D (417 aa).

This sequence belongs to the complex I 49 kDa subunit family. In terms of assembly, NDH-1 is composed of 14 different subunits. Subunits NuoB, C, D, E, F, and G constitute the peripheral sector of the complex.

The protein localises to the cell inner membrane. It catalyses the reaction a quinone + NADH + 5 H(+)(in) = a quinol + NAD(+) + 4 H(+)(out). In terms of biological role, NDH-1 shuttles electrons from NADH, via FMN and iron-sulfur (Fe-S) centers, to quinones in the respiratory chain. The immediate electron acceptor for the enzyme in this species is believed to be ubiquinone. Couples the redox reaction to proton translocation (for every two electrons transferred, four hydrogen ions are translocated across the cytoplasmic membrane), and thus conserves the redox energy in a proton gradient. The protein is NADH-quinone oxidoreductase subunit D of Francisella tularensis subsp. novicida (strain U112).